Here is a 158-residue protein sequence, read N- to C-terminus: Anti-tumor lectin (158 aa).

Gln1 carries the blocked amino end (Gln) modification. Positions 12–155 (TSVDLAAPVT…STVVEAVTYT (144 aa)) constitute a Galectin domain. Residues Asn43, His59, Arg63, Asn72, Arg74, Trp80, and Glu83 each coordinate N-acetyl-alpha-neuraminyl-(2-&gt;3)-beta-D-galactosyl-(1-&gt;4)-beta-D-glucose.

Homodimer. In terms of tissue distribution, detected in the fruiting body.

Anti-tumor lectin with DNase activity. Inhibits the growth of several tumor cell lines in vitro. Induces lymphocyte infiltration and necrosis of tumor cells in a mouse tumor model. Induces apoptosis in HeLa cells. Binds N-acetylneuraminyl lactose (N-acetyl-alpha-neuraminyl-(2-&gt;3)-beta-D-galactosyl-(1-&gt;4)-beta-D-glucose). The polypeptide is Anti-tumor lectin (Cyclocybe aegerita (Black poplar mushroom)).